We begin with the raw amino-acid sequence, 314 residues long: Porphobilinogen deaminase (314 aa).

Cysteine 242 is modified (S-(dipyrrolylmethanemethyl)cysteine).

It belongs to the HMBS family. In terms of assembly, monomer. Dipyrromethane is required as a cofactor.

It catalyses the reaction 4 porphobilinogen + H2O = hydroxymethylbilane + 4 NH4(+). It participates in porphyrin-containing compound metabolism; protoporphyrin-IX biosynthesis; coproporphyrinogen-III from 5-aminolevulinate: step 2/4. Tetrapolymerization of the monopyrrole PBG into the hydroxymethylbilane pre-uroporphyrinogen in several discrete steps. The chain is Porphobilinogen deaminase (hemC) from Bacillus subtilis (strain 168).